The primary structure comprises 310 residues: Porphobilinogen deaminase (310 aa).

At cysteine 240 the chain carries S-(dipyrrolylmethanemethyl)cysteine.

Belongs to the HMBS family. In terms of assembly, monomer. Requires dipyrromethane as cofactor.

The catalysed reaction is 4 porphobilinogen + H2O = hydroxymethylbilane + 4 NH4(+). It functions in the pathway porphyrin-containing compound metabolism; protoporphyrin-IX biosynthesis; coproporphyrinogen-III from 5-aminolevulinate: step 2/4. Its function is as follows. Tetrapolymerization of the monopyrrole PBG into the hydroxymethylbilane pre-uroporphyrinogen in several discrete steps. The polypeptide is Porphobilinogen deaminase (Desulfosudis oleivorans (strain DSM 6200 / JCM 39069 / Hxd3) (Desulfococcus oleovorans)).